A 533-amino-acid polypeptide reads, in one-letter code: Probable nucleolar protein 5-2 (533 aa).

The Nop domain occupies 281 to 399; that stretch reads IAPNLTALVG…LEARLRNLEG (119 aa). 2 disordered regions span residues 401 to 433 and 445 to 533; these read DLGR…ITPA and GETS…KSKD. Over residues 413–424 the composition is skewed to basic and acidic residues; it reads PKIEVYNKDKKM. A compositionally biased stretch (basic residues) spans 521 to 533; it reads KKDKKEKKKKSKD.

Belongs to the NOP5/NOP56 family.

It localises to the nucleus. The protein resides in the nucleolus. Functionally, required for 60S ribosomal subunit biogenesis. This is Probable nucleolar protein 5-2 (NOP5-2) from Arabidopsis thaliana (Mouse-ear cress).